The following is a 567-amino-acid chain: TPR repeat-containing protein MJ1428 (567 aa).

13 TPR repeats span residues 14–47 (YEDW…KNTN), 48–81 (PIDW…SPSN), 83–115 (YFAY…IKNE), 116–148 (ELFE…ANSK), 150–183 (LNAL…NPSH), 199–234 (INSY…DENS), 236–268 (ISYY…FNRS), 269–301 (LYYA…NSQN), 303–335 (YAYF…YLEE), 344–379 (LNLY…ENSS), 380–412 (RWWY…NPKD), 414–446 (STLK…VNSL), and 505–538 (AYIY…EMYR).

In Methanocaldococcus jannaschii (strain ATCC 43067 / DSM 2661 / JAL-1 / JCM 10045 / NBRC 100440) (Methanococcus jannaschii), this protein is TPR repeat-containing protein MJ1428.